A 207-amino-acid polypeptide reads, in one-letter code: SPRY domain-containing protein 4 (207 aa).

Residues 12–206 (CRWGAKRLGV…THSGLEVPEG (195 aa)) form the B30.2/SPRY domain. N6-acetyllysine is present on residues Lys-53 and Lys-130. An N6-succinyllysine modification is found at Lys-139.

The protein is SPRY domain-containing protein 4 (SPRYD4) of Homo sapiens (Human).